The primary structure comprises 425 residues: Serine hydroxymethyltransferase (425 aa).

(6S)-5,6,7,8-tetrahydrofolate contacts are provided by residues Leu128 and 132–134 (GHL). N6-(pyridoxal phosphate)lysine is present on Lys237.

This sequence belongs to the SHMT family. As to quaternary structure, homodimer. Pyridoxal 5'-phosphate is required as a cofactor.

Its subcellular location is the cytoplasm. The enzyme catalyses (6R)-5,10-methylene-5,6,7,8-tetrahydrofolate + glycine + H2O = (6S)-5,6,7,8-tetrahydrofolate + L-serine. It participates in one-carbon metabolism; tetrahydrofolate interconversion. Its pathway is amino-acid biosynthesis; glycine biosynthesis; glycine from L-serine: step 1/1. Its function is as follows. Catalyzes the reversible interconversion of serine and glycine with tetrahydrofolate (THF) serving as the one-carbon carrier. This reaction serves as the major source of one-carbon groups required for the biosynthesis of purines, thymidylate, methionine, and other important biomolecules. Also exhibits THF-independent aldolase activity toward beta-hydroxyamino acids, producing glycine and aldehydes, via a retro-aldol mechanism. The protein is Serine hydroxymethyltransferase of Wolbachia sp. subsp. Drosophila simulans (strain wRi).